The following is a 72-amino-acid chain: Translation initiation factor IF-1 (72 aa).

Residues 1-72 (MAKEETIQMQ…SRARITFRAK (72 aa)) form the S1-like domain.

Belongs to the IF-1 family. Component of the 30S ribosomal translation pre-initiation complex which assembles on the 30S ribosome in the order IF-2 and IF-3, IF-1 and N-formylmethionyl-tRNA(fMet); mRNA recruitment can occur at any time during PIC assembly.

The protein resides in the cytoplasm. In terms of biological role, one of the essential components for the initiation of protein synthesis. Stabilizes the binding of IF-2 and IF-3 on the 30S subunit to which N-formylmethionyl-tRNA(fMet) subsequently binds. Helps modulate mRNA selection, yielding the 30S pre-initiation complex (PIC). Upon addition of the 50S ribosomal subunit IF-1, IF-2 and IF-3 are released leaving the mature 70S translation initiation complex. In Nitrosospira multiformis (strain ATCC 25196 / NCIMB 11849 / C 71), this protein is Translation initiation factor IF-1.